A 382-amino-acid polypeptide reads, in one-letter code: Carboxynorspermidine/carboxyspermidine decarboxylase (382 aa).

The residue at position 41 (Lys41) is an N6-(pyridoxal phosphate)lysine. Substrate contacts are provided by Glu236 and Asp272.

Belongs to the Orn/Lys/Arg decarboxylase class-II family. NspC subfamily. In terms of assembly, homodimer. Pyridoxal 5'-phosphate serves as cofactor.

The protein resides in the cytoplasm. The catalysed reaction is carboxynorspermidine + H(+) = norspermidine + CO2. It carries out the reaction carboxyspermidine + H(+) = spermidine + CO2. Its function is as follows. Catalyzes the decarboxylation of carboxynorspermidine and carboxyspermidine in vitro. In vivo, responsible for synthesizing spermidine, but not sym-norspermidine. The protein is Carboxynorspermidine/carboxyspermidine decarboxylase of Campylobacter jejuni subsp. jejuni serotype O:6 (strain 81116 / NCTC 11828).